The following is a 24-amino-acid chain: FLPVVAGLAAKVLPSIICAVTKKC.

Cys-18 and Cys-24 are oxidised to a cystine.

As to expression, expressed by the skin glands.

It is found in the secreted. In terms of biological role, antibacterial activity against Gram-positive bacterium S.aureus and Gram-negative bacterium E.coli. The polypeptide is Brevinin-1SY (Lithobates sylvaticus (Wood frog)).